A 457-amino-acid polypeptide reads, in one-letter code: Bifunctional protein GlmU (457 aa).

Positions 1 to 229 are pyrophosphorylase; the sequence is MDLAAVILAA…PVEVTGINDR (229 aa). Residues 8–11, K22, Q72, and 77–78 each bind UDP-N-acetyl-alpha-D-glucosamine; these read LAAG and GT. D102 lines the Mg(2+) pocket. UDP-N-acetyl-alpha-D-glucosamine-binding residues include G139, E154, N169, and N227. N227 contacts Mg(2+). Positions 230–250 are linker; sequence RQLAEVEKYLRRRVLEDLMQS. The interval 251–457 is N-acetyltransferase; the sequence is GVTVLDPAST…WAAKKRDKKV (207 aa). 2 residues coordinate UDP-N-acetyl-alpha-D-glucosamine: R332 and K350. H362 acts as the Proton acceptor in catalysis. The UDP-N-acetyl-alpha-D-glucosamine site is built by Y365 and N376. Acetyl-CoA contacts are provided by residues 385–386, S404, A422, and R439; that span reads NY.

It in the N-terminal section; belongs to the N-acetylglucosamine-1-phosphate uridyltransferase family. The protein in the C-terminal section; belongs to the transferase hexapeptide repeat family. In terms of assembly, homotrimer. Mg(2+) is required as a cofactor.

The protein localises to the cytoplasm. The enzyme catalyses alpha-D-glucosamine 1-phosphate + acetyl-CoA = N-acetyl-alpha-D-glucosamine 1-phosphate + CoA + H(+). The catalysed reaction is N-acetyl-alpha-D-glucosamine 1-phosphate + UTP + H(+) = UDP-N-acetyl-alpha-D-glucosamine + diphosphate. The protein operates within nucleotide-sugar biosynthesis; UDP-N-acetyl-alpha-D-glucosamine biosynthesis; N-acetyl-alpha-D-glucosamine 1-phosphate from alpha-D-glucosamine 6-phosphate (route II): step 2/2. It participates in nucleotide-sugar biosynthesis; UDP-N-acetyl-alpha-D-glucosamine biosynthesis; UDP-N-acetyl-alpha-D-glucosamine from N-acetyl-alpha-D-glucosamine 1-phosphate: step 1/1. Its pathway is bacterial outer membrane biogenesis; LPS lipid A biosynthesis. Its function is as follows. Catalyzes the last two sequential reactions in the de novo biosynthetic pathway for UDP-N-acetylglucosamine (UDP-GlcNAc). The C-terminal domain catalyzes the transfer of acetyl group from acetyl coenzyme A to glucosamine-1-phosphate (GlcN-1-P) to produce N-acetylglucosamine-1-phosphate (GlcNAc-1-P), which is converted into UDP-GlcNAc by the transfer of uridine 5-monophosphate (from uridine 5-triphosphate), a reaction catalyzed by the N-terminal domain. The chain is Bifunctional protein GlmU from Pelotomaculum thermopropionicum (strain DSM 13744 / JCM 10971 / SI).